The sequence spans 311 residues: MSTREGRLKDTSIRLSEATAADFFALLKPRVMALAVFTAFVGLMVAPGAVNPVIAVIAIAAIAIGAGAAGALNMWYDADIDALMSRTSKRPVPSGRVTPGEALGFGLVLSALSVMTLGVLVGWLAASLLAFTIFFYIVIYTMWLKRSTPQNIVIGGAAGALPPVIGWAAATGAVGVESLVLFLIIFLWTPPHFWALALFKVGDYAAAGIPMMPNVAGPASTRRQILAYALLLAPVGVLPWAFGFTSGYYGIASAALGVGFIWHSWKVRAASETELKPAKALFAYSIVYLFAVFAALLADTIAMRALMSVGA.

A run of 9 helical transmembrane segments spans residues 31-51 (VMALAVFTAFVGLMVAPGAVN), 52-72 (PVIAVIAIAAIAIGAGAAGAL), 97-117 (VTPGEALGFGLVLSALSVMTL), 119-139 (VLVGWLAASLLAFTIFFYIVI), 152-172 (IVIGGAAGALPPVIGWAAATG), 179-199 (LVLFLIIFLWTPPHFWALALF), 225-245 (ILAYALLLAPVGVLPWAFGFT), 247-267 (GYYGIASAALGVGFIWHSWKV), and 281-301 (LFAYSIVYLFAVFAALLADTI).

It belongs to the UbiA prenyltransferase family. Protoheme IX farnesyltransferase subfamily.

It is found in the cell inner membrane. It carries out the reaction heme b + (2E,6E)-farnesyl diphosphate + H2O = Fe(II)-heme o + diphosphate. Its pathway is porphyrin-containing compound metabolism; heme O biosynthesis; heme O from protoheme: step 1/1. Functionally, converts heme B (protoheme IX) to heme O by substitution of the vinyl group on carbon 2 of heme B porphyrin ring with a hydroxyethyl farnesyl side group. The protein is Protoheme IX farnesyltransferase 1 of Mesorhizobium japonicum (strain LMG 29417 / CECT 9101 / MAFF 303099) (Mesorhizobium loti (strain MAFF 303099)).